The following is a 285-amino-acid chain: Flagellar filament 30.7 kDa core protein (285 aa).

This sequence belongs to the bacterial flagellin family. The core of the flagellum consists of several antigenically related polypeptides. Glycosylated. Glycosylation is not essential for motility.

The protein resides in the periplasmic flagellum. Its subcellular location is the periplasm. Component of the core of the flagella. This chain is Flagellar filament 30.7 kDa core protein (flaB3), found in Treponema maltophilum.